Reading from the N-terminus, the 845-residue chain is ABC transporter A family member 9 (845 aa).

The next 7 membrane-spanning stretches (helical) occupy residues Cys-33–Val-53, Ala-192–Gly-212, Ile-235–Phe-255, Ile-292–Phe-312, Phe-318–Leu-338, Ala-347–Ser-367, and Ser-417–Leu-437. The region spanning Val-531–Asn-762 is the ABC transporter domain. Residue Gly-565 to Thr-572 participates in ATP binding.

This sequence belongs to the ABC transporter superfamily. ABCA family.

It localises to the membrane. The chain is ABC transporter A family member 9 (abcA9) from Dictyostelium discoideum (Social amoeba).